The primary structure comprises 513 residues: Sulfhydryl oxidase 1 (513 aa).

The signal sequence occupies residues 1–30; the sequence is MAAAAVARRVVLVLVLAAASLAAAPRGAAA. Positions 31 to 174 constitute a Thioredoxin domain; it reads RSLGGREGPG…LLKWINNQMK (144 aa). Asn51 carries N-linked (GlcNAc...) asparagine glycosylation. Residues Cys76 and Cys79 each act as nucleophile in the active site. Cys76 and Cys79 form a disulfide bridge. Residues Asn193 and Asn266 are each glycosylated (N-linked (GlcNAc...) asparagine). The cysteines at positions 301 and 313 are disulfide-linked. The 103-residue stretch at 304-406 folds into the ERV/ALR sulfhydryl oxidase domain; it reads SKSETRGFSC…GDPLFPKVTW (103 aa). Residues Arg309, Trp316, His320, Glu350, His354, 377–384, Lys403, and Trp406 each bind FAD; that span reads WSTHNKVN. Cys348 and Cys351 form a disulfide bridge. Cysteines 412 and 415 form a disulfide.

It depends on FAD as a cofactor.

The protein localises to the secreted. The catalysed reaction is 2 R'C(R)SH + O2 = R'C(R)S-S(R)CR' + H2O2. Catalyzes the oxidation of sulfhydryl groups in peptide and protein thiols to disulfides with the reduction of oxygen to hydrogen peroxide. May contribute to disulfide bond formation in a variety of secreted proteins. The chain is Sulfhydryl oxidase 1 (QSOX1) from Oryza sativa subsp. japonica (Rice).